The primary structure comprises 514 residues: uncharacterized protein (514 aa).

Positions 1-15 are enriched in low complexity; the sequence is MSSPRGASSMSSRSP. Positions 1–22 are disordered; the sequence is MSSPRGASSMSSRSPVNLEPES.

This is an uncharacterized protein from Ictaluridae (bullhead catfishes).